The following is a 1431-amino-acid chain: Probable serine/threonine-protein kinase irlA (1431 aa).

Over residues 1–10 (MTKPIFKSKT) the composition is skewed to basic residues. 2 disordered regions span residues 1–81 (MTKP…EKEE) and 736–879 (KREK…NNNK). Over residues 25–43 (NEDEEEEEGGEEGGEEEEI) the composition is skewed to acidic residues. Low complexity predominate over residues 46–67 (NKNSNNSSSNSNNNNNDNNNNN). Coiled coils occupy residues 57-97 (NNNN…LDME) and 715-759 (KKRS…NNNN). Positions 68-81 (GEERKVEKEEEKEE) are enriched in basic and acidic residues. Positions 738–749 (EKKKQKDKKKNK) are enriched in basic residues. Residues 750–776 (SNQNQKNNNNQNNQSNNNKINSPSSNK) show a composition bias toward low complexity. Polar residues predominate over residues 777-791 (LTQNVTPPSSPVNII). Residues 792–812 (TSSSTTSSSTSSTTSSTTSST) show a composition bias toward low complexity. A compositionally biased stretch (polar residues) spans 821–838 (TLPIKTSSPTKPESQKPS). Positions 854–878 (NNNNNNNNNNNNNNNNNNNNNNNNN) are enriched in low complexity. A coiled-coil region spans residues 860–971 (NNNNNNNNNN…QESIQLNQTL (112 aa)). The 275-residue stretch at 987 to 1261 (RDENNIIGRG…IDTILNHPLF (275 aa)) folds into the Protein kinase domain. ATP is bound by residues 993 to 1001 (IGRGSNGTL) and Lys-1016. Asp-1130 functions as the Proton acceptor in the catalytic mechanism. The 168-residue stretch at 1264-1431 (TNEKIKFYES…NSKDYLNIKF (168 aa)) folds into the KEN domain.

Belongs to the protein kinase superfamily. Ser/Thr protein kinase family.

The catalysed reaction is L-seryl-[protein] + ATP = O-phospho-L-seryl-[protein] + ADP + H(+). The enzyme catalyses L-threonyl-[protein] + ATP = O-phospho-L-threonyl-[protein] + ADP + H(+). The polypeptide is Probable serine/threonine-protein kinase irlA (irlA) (Dictyostelium discoideum (Social amoeba)).